The sequence spans 277 residues: Diaminopimelate epimerase (277 aa).

Residues Asn13, Gln46, and Asn66 each coordinate substrate. The active-site Proton donor is Cys75. Substrate is bound by residues 76–77 (GN), Asn160, Asn193, and 211–212 (ER). The active-site Proton acceptor is Cys220. 221-222 (GS) is a binding site for substrate.

The protein belongs to the diaminopimelate epimerase family. As to quaternary structure, homodimer.

The protein localises to the cytoplasm. The catalysed reaction is (2S,6S)-2,6-diaminopimelate = meso-2,6-diaminopimelate. It participates in amino-acid biosynthesis; L-lysine biosynthesis via DAP pathway; DL-2,6-diaminopimelate from LL-2,6-diaminopimelate: step 1/1. Its function is as follows. Catalyzes the stereoinversion of LL-2,6-diaminopimelate (L,L-DAP) to meso-diaminopimelate (meso-DAP), a precursor of L-lysine and an essential component of the bacterial peptidoglycan. The protein is Diaminopimelate epimerase of Legionella pneumophila (strain Paris).